The chain runs to 366 residues: GDSL esterase/lipase At1g74460 (366 aa).

A signal peptide spans 1 to 20 (MKFCAIFVLFIVLAINGYDC). Ser-30 functions as the Nucleophile in the catalytic mechanism. N-linked (GlcNAc...) asparagine glycosylation is found at Asn-113 and Asn-260. Active-site residues include Asp-320 and His-323.

It belongs to the 'GDSL' lipolytic enzyme family.

It is found in the secreted. The polypeptide is GDSL esterase/lipase At1g74460 (Arabidopsis thaliana (Mouse-ear cress)).